We begin with the raw amino-acid sequence, 342 residues long: MSKEPPNNSREKTKNLLLKLQDNICKNLENIDGKAKFTEESWLREEGGGGRSRVLKNGSIFEQAGVNFSEVYGKELPQSIISQRPEAKGHEWFATGTSMVLHPKNPFIPTVHLNYRYFEAGPVWWFGGGADLTPYYPYLSDVRHFHKEHSNACEKVNKKLHLVFKPWCDEYFFLKHRNESRGIGGIFYDYQDGSGNIYKGSNKDGNAYKESNNIGELNLNWNNLFALAENCGEAFLSSYQPIIEKRVSQNYTKEEREFQLYRRGRYVEFNLVWDRGTIFGLQTNGRTESILMSLPPLARWEYGYKAKQGSREDLLTKIFTRPQDWQNDKVLEEFCLENNIFD.

Residue Ser-98 coordinates substrate. A divalent metal cation is bound by residues His-102 and His-112. His-112 serves as the catalytic Proton donor. Position 114 to 116 (114 to 116) interacts with substrate; it reads NYR. A divalent metal cation contacts are provided by His-146 and His-176. An important for dimerization region spans residues 266–301; the sequence is YVEFNLVWDRGTIFGLQTNGRTESILMSLPPLARWE.

Belongs to the aerobic coproporphyrinogen-III oxidase family. Homodimer. It depends on a divalent metal cation as a cofactor.

The protein resides in the cytoplasm. The enzyme catalyses coproporphyrinogen III + O2 + 2 H(+) = protoporphyrinogen IX + 2 CO2 + 2 H2O. The protein operates within porphyrin-containing compound metabolism; protoporphyrin-IX biosynthesis; protoporphyrinogen-IX from coproporphyrinogen-III (O2 route): step 1/1. Its function is as follows. Involved in the heme and chlorophyll biosynthesis. Catalyzes the aerobic oxidative decarboxylation of propionate groups of rings A and B of coproporphyrinogen-III to yield the vinyl groups in protoporphyrinogen-IX. This Prochlorococcus marinus (strain MIT 9515) protein is Oxygen-dependent coproporphyrinogen-III oxidase.